The primary structure comprises 202 residues: Protein-methionine-sulfoxide reductase heme-binding subunit MsrQ (202 aa).

6 helical membrane passes run 8 to 28 (LAVFLGALAVPAWWLYQAWIF), 42 to 62 (LGLGALVLLLLTLAMTPLQKL), 75 to 95 (LGLWCFTYVLLHLSAYYVFIL), 110 to 130 (PYIIVGMLGFVCLFLLAITSN), 147 to 167 (LVYLILGLGLLHMLWVVRADL), and 169 to 189 (EWTLYAVVGASLMLLRLPSIA).

The protein belongs to the MsrQ family. Heterodimer of a catalytic subunit (MsrP) and a heme-binding subunit (MsrQ). It depends on FMN as a cofactor. Heme b serves as cofactor.

The protein localises to the cell inner membrane. Part of the MsrPQ system that repairs oxidized periplasmic proteins containing methionine sulfoxide residues (Met-O), using respiratory chain electrons. Thus protects these proteins from oxidative-stress damage caused by reactive species of oxygen and chlorine generated by the host defense mechanisms. MsrPQ is essential for the maintenance of envelope integrity under bleach stress, rescuing a wide series of structurally unrelated periplasmic proteins from methionine oxidation. MsrQ provides electrons for reduction to the reductase catalytic subunit MsrP, using the quinone pool of the respiratory chain. This is Protein-methionine-sulfoxide reductase heme-binding subunit MsrQ from Pseudomonas aeruginosa (strain ATCC 15692 / DSM 22644 / CIP 104116 / JCM 14847 / LMG 12228 / 1C / PRS 101 / PAO1).